A 35-amino-acid polypeptide reads, in one-letter code: Turripeptide gsp9a (35 aa).

A 4-hydroxyproline mark is found at proline 3 and proline 4. Cystine bridges form between cysteine 7/cysteine 22, cysteine 12/cysteine 26, and cysteine 18/cysteine 33. Residues glutamate 14 and glutamate 17 each carry the 4-carboxyglutamate modification.

In terms of tissue distribution, expressed by the venom duct.

The protein localises to the secreted. This is Turripeptide gsp9a from Gemmula speciosa (Splendid gem-turris).